The primary structure comprises 181 residues: Adenine phosphoribosyltransferase (181 aa).

The protein belongs to the purine/pyrimidine phosphoribosyltransferase family. As to quaternary structure, homodimer.

The protein resides in the cytoplasm. The enzyme catalyses AMP + diphosphate = 5-phospho-alpha-D-ribose 1-diphosphate + adenine. Its pathway is purine metabolism; AMP biosynthesis via salvage pathway; AMP from adenine: step 1/1. Functionally, catalyzes a salvage reaction resulting in the formation of AMP, that is energically less costly than de novo synthesis. The polypeptide is Adenine phosphoribosyltransferase (Psychromonas ingrahamii (strain DSM 17664 / CCUG 51855 / 37)).